Reading from the N-terminus, the 336-residue chain is uncharacterized protein (336 aa).

Basic and acidic residues predominate over residues 297–316 (KKDLQKSEEEEHPNDDHVYM). The interval 297 to 336 (KKDLQKSEEEEHPNDDHVYMTEEDDMEKIERGIESLGNGH) is disordered.

This is an uncharacterized protein from Invertebrate iridescent virus 6 (IIV-6).